We begin with the raw amino-acid sequence, 327 residues long: DNA-directed RNA polymerase subunit alpha (327 aa).

Residues 1–231 form an alpha N-terminal domain (alpha-NTD) region; it reads MIYQMQMPAK…DHIMYFANFS (231 aa). An alpha C-terminal domain (alpha-CTD) region spans residues 247-327; sequence DEFESMRKLL…GMDITRYQMK (81 aa).

Belongs to the RNA polymerase alpha chain family. As to quaternary structure, homodimer. The RNAP catalytic core consists of 2 alpha, 1 beta, 1 beta' and 1 omega subunit. When a sigma factor is associated with the core the holoenzyme is formed, which can initiate transcription.

The enzyme catalyses RNA(n) + a ribonucleoside 5'-triphosphate = RNA(n+1) + diphosphate. Its function is as follows. DNA-dependent RNA polymerase catalyzes the transcription of DNA into RNA using the four ribonucleoside triphosphates as substrates. The protein is DNA-directed RNA polymerase subunit alpha of Chlorobium phaeobacteroides (strain DSM 266 / SMG 266 / 2430).